Consider the following 233-residue polypeptide: Enolase-phosphatase E1 (233 aa).

The Mg(2+) site is built by Asp-16 and Glu-18. Substrate contacts are provided by residues 131 to 132 (SS) and Lys-167. A Mg(2+)-binding site is contributed by Asp-193.

This sequence belongs to the HAD-like hydrolase superfamily. MasA/MtnC family. In terms of assembly, monomer. It depends on Mg(2+) as a cofactor.

The protein resides in the cytoplasm. The protein localises to the nucleus. The enzyme catalyses 5-methylsulfanyl-2,3-dioxopentyl phosphate + H2O = 1,2-dihydroxy-5-(methylsulfanyl)pent-1-en-3-one + phosphate. The protein operates within amino-acid biosynthesis; L-methionine biosynthesis via salvage pathway; L-methionine from S-methyl-5-thio-alpha-D-ribose 1-phosphate: step 3/6. It functions in the pathway amino-acid biosynthesis; L-methionine biosynthesis via salvage pathway; L-methionine from S-methyl-5-thio-alpha-D-ribose 1-phosphate: step 4/6. Functionally, bifunctional enzyme that catalyzes the enolization of 2,3-diketo-5-methylthiopentyl-1-phosphate (DK-MTP-1-P) into the intermediate 2-hydroxy-3-keto-5-methylthiopentenyl-1-phosphate (HK-MTPenyl-1-P), which is then dephosphorylated to form the acireductone 1,2-dihydroxy-3-keto-5-methylthiopentene (DHK-MTPene). This is Enolase-phosphatase E1 from Meyerozyma guilliermondii (strain ATCC 6260 / CBS 566 / DSM 6381 / JCM 1539 / NBRC 10279 / NRRL Y-324) (Yeast).